We begin with the raw amino-acid sequence, 510 residues long: G-protein coupled receptor dmsr-1 (510 aa).

Topologically, residues 1–35 (MEFTECKTTFIHLPDKSFLYDVFVSVYNFYHPIHA) are extracellular. The helical transmembrane segment at 36 to 56 (YLSIFLCVLGTIANFCNIVVL) threads the bilayer. Over 57-64 (TRRTMRTP) the chain is Cytoplasmic. The chain crosses the membrane as a helical span at residues 65-85 (VNMILTAMASCDTVVLFSNLI). Residues 86–107 (YTTHYSFVAFKFCHPKHWSYSW) lie on the Extracellular side of the membrane. A helical membrane pass occupies residues 108–128 (ALFLIAHAHLSLVAHSSSVWL). Residues 129–155 (SVMLALVRYVTLRSRGNMGGMQVTLRH) lie on the Cytoplasmic side of the membrane. The helical transmembrane segment at 156-176 (SYYAVAVTVSLVAVLNAPNFL) threads the bilayer. Residues 177-223 (NYKINEQPLNETCTDLDPMFWNSPAYLPGIADIAKANSCLVFRLSYW) are Extracellular-facing. Asn-186 carries an N-linked (GlcNAc...) asparagine glycan. The chain crosses the membrane as a helical span at residues 224-244 (ISGMVFKVLPCALLSLFVWLL). Residues 245–307 (LRILREVREN…GERVDRTTHM (63 aa)) lie on the Cytoplasmic side of the membrane. Residues 308–328 (LLAIVAVMLVTELPQGIMAVL) form a helical membrane-spanning segment. The Extracellular portion of the chain corresponds to 329–343 (SGMCSEEFRIYIYNN). The helical transmembrane segment at 344–364 (LGDILDLFSLCGSCCSFIIYC) threads the bilayer. Residues 365–510 (SMSGQFRNEF…DGIRGHFQNI (146 aa)) are Cytoplasmic-facing. Residues 452–510 (GCDSITPCSPMPTSFPSSPLPPIRSGEDESTDETSHLLNSSGPNSTASADGIRGHFQNI) form a disordered region. Polar residues predominate over residues 487 to 499 (HLLNSSGPNSTAS).

The protein belongs to the G-protein coupled receptor 1 family. Expressed in head neurons including the RID neuron and the paired AIY neurons, and in tail neurons including the paired PHA and PHB neurons. Not expressed in AVE and AVA neurons.

Its subcellular location is the cell membrane. Its function is as follows. G-protein coupled receptor. In terms of biological role, G-protein coupled receptor for flp-13 RFamide neuropeptides in vitro. Upon activation by flp-13 RFamide neuropeptides, promotes sleep in response to cellular stress also known as stress-induced sleep (SIS), probably by inhibiting the activity of wake-promoting neurons. The chain is G-protein coupled receptor dmsr-1 from Caenorhabditis elegans.